Reading from the N-terminus, the 286-residue chain is Probable xyloglucan endotransglucosylase/hydrolase protein 23 (286 aa).

An N-terminal signal peptide occupies residues 1–24; the sequence is MAMISYSTIVVALLASFMICSVSA. A GH16 domain is found at 25-214; sequence NFQRDVEITW…WSKAPFTASY (190 aa). Residue glutamate 100 is the Nucleophile of the active site. Glutamate 104 functions as the Proton donor in the catalytic mechanism. Residue glutamate 104 participates in xyloglucan binding. Asparagine 108 carries an N-linked (GlcNAc...) asparagine glycan. Residues 117-119, 127-129, 193-194, and glycine 198 contribute to the xyloglucan site; these read HTN, DRE, and EW. Cysteine 222 and cysteine 231 are disulfide-bonded. The N-linked (GlcNAc...) asparagine glycan is linked to asparagine 233. A disulfide bond links cysteine 269 and cysteine 283. Residue arginine 274 participates in xyloglucan binding.

Belongs to the glycosyl hydrolase 16 family. XTH group 2 subfamily. In terms of processing, contains at least one intrachain disulfide bond essential for its enzymatic activity.

It localises to the secreted. The protein resides in the cell wall. Its subcellular location is the extracellular space. It is found in the apoplast. The catalysed reaction is breaks a beta-(1-&gt;4) bond in the backbone of a xyloglucan and transfers the xyloglucanyl segment on to O-4 of the non-reducing terminal glucose residue of an acceptor, which can be a xyloglucan or an oligosaccharide of xyloglucan.. Catalyzes xyloglucan endohydrolysis (XEH) and/or endotransglycosylation (XET). Cleaves and religates xyloglucan polymers, an essential constituent of the primary cell wall, and thereby participates in cell wall construction of growing tissues. The sequence is that of Probable xyloglucan endotransglucosylase/hydrolase protein 23 (XTH23) from Arabidopsis thaliana (Mouse-ear cress).